Here is a 656-residue protein sequence, read N- to C-terminus: Vacuolar amino acid transporter 3 (656 aa).

The tract at residues 1-109 is disordered; the sequence is MSNSQSIKIK…VPSTSEDPDV (109 aa). Residues 15–28 show a composition bias toward polar residues; the sequence is NENFASGSYSSRRS. A phosphoserine mark is found at serine 37 and serine 53. A compositionally biased stretch (polar residues) spans 50–71; it reads ISPSESNLPNNVAENTTDTPVN. A compositionally biased stretch (basic and acidic residues) spans 75–97; sequence IRDENHNSRKGKDVTLNSDEAHS. Serine 172 carries the post-translational modification Phosphoserine. 11 helical membrane-spanning segments follow: residues 280-300, 307-327, 351-371, 389-409, 419-439, 457-477, 494-514, 537-557, 578-598, 601-621, and 636-656; these read AVLL…PKAF, FSSA…LLLI, FAIL…YISF, EYHL…LSLV, ALIA…WDVI, FSLF…ILPI, VMAA…AAFG, LYAI…IAII, YLRV…SSRL, FVSM…PPML, and DIFM…MTFF.

Belongs to the amino acid/polyamine transporter 2 family.

The protein resides in the endoplasmic reticulum membrane. It is found in the vacuole membrane. Its function is as follows. Involved in amino acid efflux from the vacuole to the cytoplasm. Capable of transporting large neutral amino acids including tyrosine, glutamine, asparagine, isoleucine and leucine. Required for spore formation. The polypeptide is Vacuolar amino acid transporter 3 (avt3) (Schizosaccharomyces pombe (strain 972 / ATCC 24843) (Fission yeast)).